The primary structure comprises 462 residues: L-seryl-tRNA(Sec) selenium transferase (462 aa).

The residue at position 292 (Lys-292) is an N6-(pyridoxal phosphate)lysine.

The protein belongs to the SelA family. The cofactor is pyridoxal 5'-phosphate.

The protein resides in the cytoplasm. It catalyses the reaction L-seryl-tRNA(Sec) + selenophosphate + H(+) = L-selenocysteinyl-tRNA(Sec) + phosphate. Its pathway is aminoacyl-tRNA biosynthesis; selenocysteinyl-tRNA(Sec) biosynthesis; selenocysteinyl-tRNA(Sec) from L-seryl-tRNA(Sec) (bacterial route): step 1/1. In terms of biological role, converts seryl-tRNA(Sec) to selenocysteinyl-tRNA(Sec) required for selenoprotein biosynthesis. This is L-seryl-tRNA(Sec) selenium transferase from Geotalea uraniireducens (strain Rf4) (Geobacter uraniireducens).